The sequence spans 320 residues: ATP-dependent 6-phosphofructokinase (320 aa).

ATP is bound at residue G12. 22-26 (RGVVR) serves as a coordination point for ADP. ATP is bound by residues 73 to 74 (RF) and 103 to 106 (GDGS). A Mg(2+)-binding site is contributed by D104. 126-128 (TID) lines the substrate pocket. Residue D128 is the Proton acceptor of the active site. R155 contributes to the ADP binding site. Substrate contacts are provided by residues R163 and 170–172 (MGR). ADP contacts are provided by residues 186-188 (GCE), K212, and 214-216 (KKH). Substrate-binding positions include E223, R244, and 250–253 (HIQR).

The protein belongs to the phosphofructokinase type A (PFKA) family. ATP-dependent PFK group I subfamily. Prokaryotic clade 'B1' sub-subfamily. In terms of assembly, homotetramer. It depends on Mg(2+) as a cofactor.

It is found in the cytoplasm. It catalyses the reaction beta-D-fructose 6-phosphate + ATP = beta-D-fructose 1,6-bisphosphate + ADP + H(+). The protein operates within carbohydrate degradation; glycolysis; D-glyceraldehyde 3-phosphate and glycerone phosphate from D-glucose: step 3/4. Its activity is regulated as follows. Allosterically activated by ADP and other diphosphonucleosides, and allosterically inhibited by phosphoenolpyruvate. Functionally, catalyzes the phosphorylation of D-fructose 6-phosphate to fructose 1,6-bisphosphate by ATP, the first committing step of glycolysis. The sequence is that of ATP-dependent 6-phosphofructokinase from Aliivibrio salmonicida (strain LFI1238) (Vibrio salmonicida (strain LFI1238)).